A 186-amino-acid polypeptide reads, in one-letter code: NADH-quinone oxidoreductase subunit C (186 aa).

The disordered stretch occupies residues 166–186 (DSLTPWKGVGRPSDPFDGRKE).

Belongs to the complex I 30 kDa subunit family. In terms of assembly, NDH-1 is composed of 14 different subunits. Subunits NuoB, C, D, E, F, and G constitute the peripheral sector of the complex.

Its subcellular location is the cell inner membrane. The enzyme catalyses a quinone + NADH + 5 H(+)(in) = a quinol + NAD(+) + 4 H(+)(out). Functionally, NDH-1 shuttles electrons from NADH, via FMN and iron-sulfur (Fe-S) centers, to quinones in the respiratory chain. The immediate electron acceptor for the enzyme in this species is believed to be ubiquinone. Couples the redox reaction to proton translocation (for every two electrons transferred, four hydrogen ions are translocated across the cytoplasmic membrane), and thus conserves the redox energy in a proton gradient. The polypeptide is NADH-quinone oxidoreductase subunit C (Neorickettsia sennetsu (strain ATCC VR-367 / Miyayama) (Ehrlichia sennetsu)).